A 473-amino-acid polypeptide reads, in one-letter code: Arginine biosynthesis bifunctional protein ArgJ, mitochondrial (473 aa).

Residues Thr-201, Lys-230, Thr-241, Glu-328, Asn-468, and Thr-473 each coordinate substrate. Thr-241 functions as the Nucleophile in the catalytic mechanism.

The protein belongs to the ArgJ family. Heterodimer of an alpha and a beta chain. The alpha and beta chains are autoproteolytically processed from a single precursor protein within the mitochondrion.

The protein resides in the mitochondrion matrix. The catalysed reaction is N(2)-acetyl-L-ornithine + L-glutamate = N-acetyl-L-glutamate + L-ornithine. The enzyme catalyses L-glutamate + acetyl-CoA = N-acetyl-L-glutamate + CoA + H(+). Its pathway is amino-acid biosynthesis; L-arginine biosynthesis; L-ornithine and N-acetyl-L-glutamate from L-glutamate and N(2)-acetyl-L-ornithine (cyclic): step 1/1. The protein operates within amino-acid biosynthesis; L-arginine biosynthesis; N(2)-acetyl-L-ornithine from L-glutamate: step 1/4. Its function is as follows. Catalyzes two activities which are involved in the cyclic version of arginine biosynthesis: the synthesis of acetylglutamate from glutamate and acetyl-CoA, and of ornithine by transacetylation between acetylornithine and glutamate. In Paracoccidioides brasiliensis (strain Pb18), this protein is Arginine biosynthesis bifunctional protein ArgJ, mitochondrial.